Here is a 413-residue protein sequence, read N- to C-terminus: MMISIFSLLASTAILVFANGQSNVKLEFVQAMWRHGERASQVDQYPIYEKDWIYGGGGLGELTAIGMGEMNELGWLIRKRYVTKLKFLTPKYASREVYFRSTNFNRTIISAQSLLYGLFPPSLYDVKNVDYPYSPLTWFPGFTFVPVHVDGPDQCAASQNCPCTRYDLLQGQMLTLPEVLPKYTQVVLLNRRVGGYYNMTSGLDSFTTYPDTWKCQRAYFNRTMYAKLPWYNEELYYQAQVTYAPVKGFLEGNFENPAVTSSGLDVGLEIKKVRSGVIINEVFNRANEKLNCAELGQNCTSYLNKLKFYGYSIHDNNVYGVLVALGIPQIANTLDGWPAYAAGIFMEFHRNTSTNERFFKVLYREGDDTPISDVTSQLPICNGATLCPLGALQTLAETLKPLPDITTLCKTPL.

H35 (nucleophile) is an active-site residue. The Proton donor role is filled by D315. A disulfide bond links C381 and C387.

The protein belongs to the histidine acid phosphatase family.

The enzyme catalyses a phosphate monoester + H2O = an alcohol + phosphate. This Caenorhabditis elegans protein is Putative acid phosphatase 11 (pho-11).